The sequence spans 423 residues: MRKDLLILTDILKANVAPALGCTEPGAVAYAVSKAREILGEEPREVYVAVDRDILKNGMFVSIPGTKEKGLVFAAALALVCGKSEYKLEALREATEEDIKKAHKIVNRKAVKIVLEKDAEGLYIKASVVGDKHRATVIVKDAHDNIVYEERDGVVLKAKEENLKEDKSWLKAKIKEFTIEDFLDYCDSVDFKEIEFIGEGIEMNKKIAYAGLNEEVGVGIGKMLKRQIRDEESLAKALTAAASEARMSGYPLPVMSSAGSGNHGLVAILPIAIIGEERGYDREKIIRAITLSHLLTAYVKAYIGVLSPICGCGVAAGVGMSAGLTYLLGGSRKQIKGAVSNMLAGLSGMICDGAKIGCAYKLSISVTAALEASKFAMENIFIPSDNGILGNTAEESIKNLGRISVEGMKNADDVILDIMLKKQ.

Belongs to the UPF0597 family.

This Caldanaerobacter subterraneus subsp. tengcongensis (strain DSM 15242 / JCM 11007 / NBRC 100824 / MB4) (Thermoanaerobacter tengcongensis) protein is UPF0597 protein TTE0269.